The following is a 581-amino-acid chain: Pre-mRNA 3'-end-processing factor FIP1 (581 aa).

Composition is skewed to basic and acidic residues over residues 1–10 and 32–42; these read MSAGEVERLV and VHVHSDLAKDL. 3 disordered regions span residues 1-95, 211-282, and 320-581; these read MSAG…EDDV, TVQQ…ESPD, and RSAT…APAE. The sufficient for interaction with PAPOLA stretch occupies residues 1–110; sequence MSAGEVERLV…DIKTGAPQYG (110 aa). The interval 1 to 332 is necessary for stimulating PAPOLA activity; that stretch reads MSAGEVERLV…TEVDNNFSKP (332 aa). Acidic residues-rich tracts occupy residues 43–54 and 80–94; these read DENEVERPEEEN and TEDDSDSDSDDDEDD. Residues Ser84, Ser86, and Ser88 each carry the phosphoserine modification. The tract at residues 136-219 is sufficient for interaction with CPSF4; that stretch reads KGVDLDAPGS…ITVQQGRTGN (84 aa). Residues 247-267 show a composition bias toward low complexity; that stretch reads SRNSTSSQSQTSTASRKASSS. Basic and acidic residues predominate over residues 271 to 282; the sequence is WQDRYGRAESPD. At Ser280 the chain carries Phosphoserine. Positions 320 to 330 are enriched in polar residues; it reads RSATEVDNNFS. Positions 331-389 are enriched in pro residues; the sequence is KPPPFFPPGAPPTHLPPPPFLPPPPTVSTAPPLIPPPGIPITVPPPGFPPPPGAPPPSL. At Tyr411 the chain carries Phosphotyrosine. Residues 419 to 435 show a composition bias toward polar residues; the sequence is LTSSAPSWPSLVDTTKQ. The sufficient for interaction with CPSF1 and CSTF3 stretch occupies residues 428 to 581; sequence SLVDTTKQWD…QESTEAAPAE (154 aa). The span at 439–479 shows a compositional bias: basic and acidic residues; that stretch reads YARREKDRDRDRERDRDRERERDRDRERERTRERERERDHS. The interval 442 to 477 is arg/Asp/Glu-rich domain; that stretch reads REKDRDRDRERDRDRERERDRDRERERTRERERERD. The tract at residues 478-535 is sufficient for interaction with AHCYL1; sequence HSPTPSVFNSDEERYRYREYAERGYERHRASREKEERHRERRHREKEETRHKSSRSNS. Ser479 is modified (phosphoserine). Residue Thr481 is modified to Phosphothreonine. Residues Ser483 and Ser487 each carry the phosphoserine modification. Residues 488 to 515 are compositionally biased toward basic and acidic residues; the sequence is DEERYRYREYAERGYERHRASREKEERH. Basic residues predominate over residues 529 to 538; the sequence is KSSRSNSRRR. The residue at position 541 (Ser541) is a Phosphoserine. A compositionally biased stretch (basic residues) spans 547 to 557; it reads HRRHKHKKSKR.

It belongs to the FIP1 family. Component of the cleavage and polyadenylation specificity factor (CPSF) complex, composed of CPSF1, CPSF2, CPSF3, CPSF4 and FIP1L1. Found in a complex with CPSF1, FIP1L1 and PAPOLA. Interacts with CPSF1, CPSF4, CSTF2 and CSTF3. Interacts with AHCYL1 (when phosphorylated); the interaction is direct and associates AHCYL1 with the CPSF complex and RNA. Interacts with PAPOLA; the interaction seems to be increased by the interaction with AHCYL1. Interacts with NUDT21/CPSF5; this interaction occurs in a RNA sequence-specific manner. Interacts (preferentially via unphosphorylated form and Arg/Glu/Asp-rich domain) with CPSF6 (via Arg/Ser-rich domain); this interaction mediates, at least in part, the interaction between the CFIm and CPSF complexes and may be inhibited by CPSF6 hyper-phosphorylation. Interacts (preferentially via unphosphorylated form and Arg/Asp/Glu-rich domain) with CPSF7 (via Arg/Ser-rich domain); this interaction mediates, at least in part, the interaction between the CFIm and CPSF complexes and may be inhibited by CPSF7 hyper-phosphorylation.

The protein localises to the nucleus. In terms of biological role, component of the cleavage and polyadenylation specificity factor (CPSF) complex that plays a key role in pre-mRNA 3'-end formation, recognizing the AAUAAA signal sequence and interacting with poly(A) polymerase and other factors to bring about cleavage and poly(A) addition. FIP1L1 contributes to poly(A) site recognition and stimulates poly(A) addition. Binds to U-rich RNA sequence elements surrounding the poly(A) site. May act to tether poly(A) polymerase to the CPSF complex. This Mus musculus (Mouse) protein is Pre-mRNA 3'-end-processing factor FIP1 (Fip1l1).